A 248-amino-acid chain; its full sequence is Small ribosomal subunit protein uS3 (248 aa).

One can recognise a KH type-2 domain in the interval 39–113 (IRAYLTKQLS…TIRINVVEVT (75 aa)). Residues 218-248 (ERPEQKVPLQQPKRRQQRRRPTFEDRSAVEA) form a disordered region. Over residues 238 to 248 (PTFEDRSAVEA) the composition is skewed to basic and acidic residues.

It belongs to the universal ribosomal protein uS3 family. As to quaternary structure, part of the 30S ribosomal subunit. Forms a tight complex with proteins S10 and S14.

Functionally, binds the lower part of the 30S subunit head. Binds mRNA in the 70S ribosome, positioning it for translation. This chain is Small ribosomal subunit protein uS3, found in Synechococcus sp. (strain JA-3-3Ab) (Cyanobacteria bacterium Yellowstone A-Prime).